Reading from the N-terminus, the 80-residue chain is Defensin-like protein 44 (80 aa).

The first 27 residues, 1-27, serve as a signal peptide directing secretion; sequence MAITKTSVTLLLLIIMAASLSNFSVLA. Disulfide bonds link C40-C79, C44-C67, C53-C77, and C57-C78.

The protein belongs to the DEFL family.

It localises to the secreted. The protein is Defensin-like protein 44 of Arabidopsis thaliana (Mouse-ear cress).